The following is a 223-amino-acid chain: Probable cell wall protein PGA61 (223 aa).

An N-terminal signal peptide occupies residues 1 to 16 (MKSGLLLAVILPVAFA). N-linked (GlcNAc...) asparagine glycosylation occurs at Asn-25. The tract at residues 83 to 134 (GAPSSSSTPTSSTETTSSTEAETTEAETTEQPSSSTSSNTESSKTTILETPS) is disordered. Low complexity-rich tracts occupy residues 84–103 (APSSSSTPTSSTETTSSTEA) and 111–128 (TEQPSSSTSSNTESSKTT). N-linked (GlcNAc...) asparagine glycosylation occurs at Asn-188. Asn-202 carries the GPI-anchor amidated asparagine lipid modification. Positions 203–223 (GAGRAAVIGSGSLLALLLNFI) are cleaved as a propeptide — removed in mature form.

Belongs to the IHD1 family. Post-translationally, the GPI-anchor is attached to the protein in the endoplasmic reticulum and serves to target the protein to the cell surface. There, the glucosamine-inositol phospholipid moiety is cleaved off and the GPI-modified mannoprotein is covalently attached via its lipidless GPI glycan remnant to the 1,6-beta-glucan of the outer cell wall layer.

The protein resides in the secreted. The protein localises to the cell wall. Its subcellular location is the membrane. In terms of biological role, probable GPI-anchored cell wall protein that may be involved in cell wall organization, hyphal growth, as well as in virulence. The protein is Probable cell wall protein PGA61 (PGA61) of Candida albicans (strain SC5314 / ATCC MYA-2876) (Yeast).